A 108-amino-acid polypeptide reads, in one-letter code: Nucleoid-associated protein Bcen_6253 (108 aa).

The segment covering 85 to 95 (ATSQEKMSGMT) has biased composition (polar residues). The disordered stretch occupies residues 85 to 108 (ATSQEKMSGMTSGLPLPPGFKLPF). Positions 99-108 (PLPPGFKLPF) are enriched in pro residues.

This sequence belongs to the YbaB/EbfC family. As to quaternary structure, homodimer.

The protein localises to the cytoplasm. It localises to the nucleoid. Binds to DNA and alters its conformation. May be involved in regulation of gene expression, nucleoid organization and DNA protection. This Burkholderia orbicola (strain AU 1054) protein is Nucleoid-associated protein Bcen_6253.